The sequence spans 639 residues: Alpha-dioxygenase 1 (639 aa).

His163 (proton acceptor) is an active-site residue. Asp164 contributes to the Ca(2+) binding site. Heme b is bound at residue His168. Ca(2+) is bound by residues Thr216, Trp218, Asp220, and Ser222. His389, Arg486, and Arg490 together coordinate heme b.

It belongs to the peroxidase family. As to quaternary structure, forms monomers in solution. Heme b serves as cofactor. It depends on Ca(2+) as a cofactor. Expressed in roots (epiderm), mature flowers (e.g. anthers) and senescing leaves.

It is found in the lipid droplet. It carries out the reaction a 1,2-saturated fatty acid + O2 = a (2R)-2-hydroperoxy fatty acid. The enzyme catalyses (9Z,12Z,15Z)-octadecatrienoate + O2 = (R)-2-hydroperoxy-(9Z,12Z,15Z)-octadecatrienoate. The catalysed reaction is hexadecanoate + O2 = (2R)-2-hydroperoxyhexadecanoate. It catalyses the reaction (9Z,12Z)-octadecadienoate + O2 = (2R,9Z,12Z)-2-hydroperoxyoctadecadienoate. It carries out the reaction (9Z)-octadecenoate + O2 = (2R,9Z)-2-hydroperoxyoctadecenoate. Functionally, alpha-dioxygenase that catalyzes the primary oxygenation step of a variety of 14-20 carbon fatty acids, containing up to three unsaturated bonds, into their corresponding 2R-hydroperoxides. Involved in the production of oxylipins that function in cell signaling, wound healing, and protection from infection. Mediates protection against oxidative stress and cell death, probably by generating some lipid-derived molecules. Promotes local and systemic plant defense in a salicylic acid (SA)-dependent manner, including the establishment of systemic acquired resistance (SAR) in response to incompatible interaction. Involved in a negative regulation of abscisic acid (ABA)-mediated signaling pathway. In Arabidopsis thaliana (Mouse-ear cress), this protein is Alpha-dioxygenase 1.